Reading from the N-terminus, the 262-residue chain is Encapsulin nanocompartment protein Rv1762c (262 aa).

Belongs to the UPF0145 family.

It localises to the encapsulin nanocompartment. Cargo protein of a type 1 encapsulin nanocompartment possibly involved in protection against oxidative stress. This Mycobacterium tuberculosis (strain ATCC 25618 / H37Rv) protein is Encapsulin nanocompartment protein Rv1762c.